A 396-amino-acid polypeptide reads, in one-letter code: 1-deoxy-D-xylulose 5-phosphate reductoisomerase (396 aa).

NADPH is bound by residues T13, G14, S15, I16, and N127. K128 is a 1-deoxy-D-xylulose 5-phosphate binding site. E129 serves as a coordination point for NADPH. Residue D153 participates in Mn(2+) binding. 4 residues coordinate 1-deoxy-D-xylulose 5-phosphate: S154, E155, S184, and H207. Position 155 (E155) interacts with Mn(2+). NADPH is bound at residue G213. S220, N225, K226, and E229 together coordinate 1-deoxy-D-xylulose 5-phosphate. Mn(2+) is bound at residue E229.

Belongs to the DXR family. Mg(2+) is required as a cofactor. The cofactor is Mn(2+).

It catalyses the reaction 2-C-methyl-D-erythritol 4-phosphate + NADP(+) = 1-deoxy-D-xylulose 5-phosphate + NADPH + H(+). The protein operates within isoprenoid biosynthesis; isopentenyl diphosphate biosynthesis via DXP pathway; isopentenyl diphosphate from 1-deoxy-D-xylulose 5-phosphate: step 1/6. Functionally, catalyzes the NADPH-dependent rearrangement and reduction of 1-deoxy-D-xylulose-5-phosphate (DXP) to 2-C-methyl-D-erythritol 4-phosphate (MEP). This chain is 1-deoxy-D-xylulose 5-phosphate reductoisomerase, found in Pseudomonas fluorescens (strain ATCC BAA-477 / NRRL B-23932 / Pf-5).